The sequence spans 235 residues: Purine nucleoside phosphorylase DeoD-type (235 aa).

H4 provides a ligand contact to a purine D-ribonucleoside. Residues G20, R24, R43, and 87–90 (RVGT) each bind phosphate. A purine D-ribonucleoside is bound by residues E162, 179-181 (EME), and 203-204 (SD). D204 serves as the catalytic Proton donor.

The protein belongs to the PNP/UDP phosphorylase family. Homohexamer; trimer of homodimers.

It catalyses the reaction a purine D-ribonucleoside + phosphate = a purine nucleobase + alpha-D-ribose 1-phosphate. It carries out the reaction a purine 2'-deoxy-D-ribonucleoside + phosphate = a purine nucleobase + 2-deoxy-alpha-D-ribose 1-phosphate. Functionally, catalyzes the reversible phosphorolytic breakdown of the N-glycosidic bond in the beta-(deoxy)ribonucleoside molecules, with the formation of the corresponding free purine bases and pentose-1-phosphate. This is Purine nucleoside phosphorylase DeoD-type from Bacillus cytotoxicus (strain DSM 22905 / CIP 110041 / 391-98 / NVH 391-98).